A 232-amino-acid polypeptide reads, in one-letter code: Phosphatidylserine decarboxylase proenzyme (232 aa).

Serine 190 functions as the Schiff-base intermediate with substrate; via pyruvic acid in the catalytic mechanism. Residue serine 190 is modified to Pyruvic acid (Ser); by autocatalysis.

The protein belongs to the phosphatidylserine decarboxylase family. PSD-A subfamily. In terms of assembly, heterodimer of a large membrane-associated beta subunit and a small pyruvoyl-containing alpha subunit. The cofactor is pyruvate. Is synthesized initially as an inactive proenzyme. Formation of the active enzyme involves a self-maturation process in which the active site pyruvoyl group is generated from an internal serine residue via an autocatalytic post-translational modification. Two non-identical subunits are generated from the proenzyme in this reaction, and the pyruvate is formed at the N-terminus of the alpha chain, which is derived from the carboxyl end of the proenzyme. The post-translation cleavage follows an unusual pathway, termed non-hydrolytic serinolysis, in which the side chain hydroxyl group of the serine supplies its oxygen atom to form the C-terminus of the beta chain, while the remainder of the serine residue undergoes an oxidative deamination to produce ammonia and the pyruvoyl prosthetic group on the alpha chain.

The protein resides in the cell membrane. The catalysed reaction is a 1,2-diacyl-sn-glycero-3-phospho-L-serine + H(+) = a 1,2-diacyl-sn-glycero-3-phosphoethanolamine + CO2. The protein operates within phospholipid metabolism; phosphatidylethanolamine biosynthesis; phosphatidylethanolamine from CDP-diacylglycerol: step 2/2. Functionally, catalyzes the formation of phosphatidylethanolamine (PtdEtn) from phosphatidylserine (PtdSer). This Bartonella henselae (strain ATCC 49882 / DSM 28221 / CCUG 30454 / Houston 1) (Rochalimaea henselae) protein is Phosphatidylserine decarboxylase proenzyme.